The primary structure comprises 168 residues: NADH-quinone oxidoreductase subunit E 2 (168 aa).

[2Fe-2S] cluster is bound by residues cysteine 77, cysteine 82, cysteine 118, and cysteine 122.

Belongs to the complex I 24 kDa subunit family. The cofactor is [2Fe-2S] cluster.

It carries out the reaction a quinone + NADH + 5 H(+)(in) = a quinol + NAD(+) + 4 H(+)(out). In terms of biological role, NDH-1 shuttles electrons from NADH, via FMN and iron-sulfur (Fe-S) centers, to quinones in the respiratory chain. The immediate electron acceptor for the enzyme in this species is believed to be ubiquinone. Couples the redox reaction to proton translocation (for every two electrons transferred, four hydrogen ions are translocated across the cytoplasmic membrane), and thus conserves the redox energy in a proton gradient. This is NADH-quinone oxidoreductase subunit E 2 (nuoE2) from Rhizobium meliloti (strain 1021) (Ensifer meliloti).